A 154-amino-acid polypeptide reads, in one-letter code: Ubiquitin-conjugating enzyme E2 L3 (154 aa).

In terms of domain architecture, UBC core spans Ala2–Glu149. Cys86 (glycyl thioester intermediate) is an active-site residue. Lys131 carries the N6-acetyllysine modification.

This sequence belongs to the ubiquitin-conjugating enzyme family. Interacts with PRKN; involved in ubiquitination and degradation of misfolded proteins. Interacts with UBE3A. Interacts with CCNB1IP1, CBL, ZAP70, RNF19A, RNF19B and RNF144B. Interacts with ARIH1. Interacts with ARIH2 (via RING-type 1). Interacts with NCOA1; they functionally interact to regulate progesterone receptor transcriptional activity. Interacts with NDFIP1 (via N-terminus); the interaction mediates recruitment of UBE2L3 to ITCH and causes MAP3K7 ubiquitination. Ubiquitinated. The alteration of UBE2L3 protein levels during the S-phase of the cell cycle is due to ubiquitin-dependent proteasomal degradation. Autoubiquitinated in vitro.

It is found in the nucleus. The protein localises to the cytoplasm. It carries out the reaction S-ubiquitinyl-[E1 ubiquitin-activating enzyme]-L-cysteine + [E2 ubiquitin-conjugating enzyme]-L-cysteine = [E1 ubiquitin-activating enzyme]-L-cysteine + S-ubiquitinyl-[E2 ubiquitin-conjugating enzyme]-L-cysteine.. Its pathway is protein modification; protein ubiquitination. Its function is as follows. Ubiquitin-conjugating enzyme E2 that specifically acts with HECT-type and RBR family E3 ubiquitin-protein ligases. Does not function with most RING-containing E3 ubiquitin-protein ligases because it lacks intrinsic E3-independent reactivity with lysine: in contrast, it has activity with the RBR family E3 enzymes, such as PRKN, RNF31 and ARIH1, that function like RING-HECT hybrids. Accepts ubiquitin from the E1 complex and catalyzes its covalent attachment to other proteins. Mediates ubiquitination by the CUL9-RBX1 complex. In vitro catalyzes 'Lys-11'-linked polyubiquitination. Involved in the selective degradation of short-lived and abnormal proteins. Down-regulated during the S-phase it is involved in progression through the cell cycle. Regulates nuclear hormone receptors transcriptional activity. May play a role in myelopoiesis. This chain is Ubiquitin-conjugating enzyme E2 L3 (UBE2L3), found in Pongo abelii (Sumatran orangutan).